We begin with the raw amino-acid sequence, 183 residues long: ATP-dependent protease subunit HslV (183 aa).

Thr9 is an active-site residue. Residues Ala164, Cys167, and Thr170 each coordinate Na(+).

The protein belongs to the peptidase T1B family. HslV subfamily. In terms of assembly, a double ring-shaped homohexamer of HslV is capped on each side by a ring-shaped HslU homohexamer. The assembly of the HslU/HslV complex is dependent on binding of ATP.

The protein localises to the cytoplasm. It carries out the reaction ATP-dependent cleavage of peptide bonds with broad specificity.. Its activity is regulated as follows. Allosterically activated by HslU binding. Protease subunit of a proteasome-like degradation complex believed to be a general protein degrading machinery. The sequence is that of ATP-dependent protease subunit HslV from Hydrogenovibrio crunogenus (strain DSM 25203 / XCL-2) (Thiomicrospira crunogena).